Reading from the N-terminus, the 293-residue chain is MNAFDADITEHADSSGCHPLFRDVPATVEFNKLRKRLVRLTRQAIEDFAMVKPGDRWMVCLSGGKDSYGLLALLLDLKWRGLLPVELLAVNLDQGQPNFPKHILPDFLTRYGIEHRIEYQDTYSIVTDKLPETSTYCSLCSRLRRGNLYRIAREEGCSAIVLGHHREDILETFFMNLFHGGRLAAMPPKLLNDEGDLMVFRPLAYAAEDDLEKFANAMQFPIIPCDLCGSQDGLQRNAMKAMLIDIEKRMPGRKDTMIRALTNVRPSHLLDRKLFDFAGLMANGEKGSDDALW.

The short motif at serine 62–serine 67 is the PP-loop motif element. The [4Fe-4S] cluster site is built by cysteine 137, cysteine 140, and cysteine 228.

This sequence belongs to the TtcA family. In terms of assembly, homodimer. The cofactor is Mg(2+). [4Fe-4S] cluster is required as a cofactor.

The protein localises to the cytoplasm. It carries out the reaction cytidine(32) in tRNA + S-sulfanyl-L-cysteinyl-[cysteine desulfurase] + AH2 + ATP = 2-thiocytidine(32) in tRNA + L-cysteinyl-[cysteine desulfurase] + A + AMP + diphosphate + H(+). The protein operates within tRNA modification. Catalyzes the ATP-dependent 2-thiolation of cytidine in position 32 of tRNA, to form 2-thiocytidine (s(2)C32). The sulfur atoms are provided by the cysteine/cysteine desulfurase (IscS) system. The chain is tRNA-cytidine(32) 2-sulfurtransferase from Brucella melitensis biotype 1 (strain ATCC 23456 / CCUG 17765 / NCTC 10094 / 16M).